The chain runs to 233 residues: ATP synthase subunit a, chloroplastic (233 aa).

4 consecutive transmembrane segments (helical) span residues 82–102 (VPFI…GALI), 121–141 (INTT…AGIS), 177–199 (LFGN…PLIV), and 211–231 (SSIQ…EAIE).

Belongs to the ATPase A chain family. In terms of assembly, F-type ATPases have 2 components, CF(1) - the catalytic core - and CF(0) - the membrane proton channel. CF(1) has five subunits: alpha(3), beta(3), gamma(1), delta(1), epsilon(1). CF(0) has four main subunits: a, b, b' and c.

Its subcellular location is the plastid. The protein resides in the chloroplast thylakoid membrane. Functionally, key component of the proton channel; it plays a direct role in the translocation of protons across the membrane. The sequence is that of ATP synthase subunit a, chloroplastic from Galdieria sulphuraria (Red alga).